Reading from the N-terminus, the 109-residue chain is Thiosulfate sulfurtransferase GlpE (109 aa).

One can recognise a Rhodanese domain in the interval Arg16–Ala104. Cys64 (cysteine persulfide intermediate) is an active-site residue.

Belongs to the GlpE family.

It localises to the cytoplasm. The enzyme catalyses thiosulfate + hydrogen cyanide = thiocyanate + sulfite + 2 H(+). It catalyses the reaction thiosulfate + [thioredoxin]-dithiol = [thioredoxin]-disulfide + hydrogen sulfide + sulfite + 2 H(+). Its function is as follows. Transferase that catalyzes the transfer of sulfur from thiosulfate to thiophilic acceptors such as cyanide or dithiols. May function in a CysM-independent thiosulfate assimilation pathway by catalyzing the conversion of thiosulfate to sulfite, which can then be used for L-cysteine biosynthesis. The polypeptide is Thiosulfate sulfurtransferase GlpE (Pseudomonas fluorescens (strain ATCC BAA-477 / NRRL B-23932 / Pf-5)).